We begin with the raw amino-acid sequence, 476 residues long: Glutamate--tRNA ligase (476 aa).

A 'HIGH' region motif is present at residues 9 to 19 (PSPTGKLHIGT). The span at 109-129 (REEQKSRNKPPRYDNRHRSLS) shows a compositional bias: basic and acidic residues. The tract at residues 109–133 (REEQKSRNKPPRYDNRHRSLSTEEE) is disordered. Residues 248-252 (KLSKR) carry the 'KMSKS' region motif. Lysine 251 is an ATP binding site.

It belongs to the class-I aminoacyl-tRNA synthetase family. Glutamate--tRNA ligase type 1 subfamily. In terms of assembly, monomer.

The protein resides in the cytoplasm. It carries out the reaction tRNA(Glu) + L-glutamate + ATP = L-glutamyl-tRNA(Glu) + AMP + diphosphate. In terms of biological role, catalyzes the attachment of glutamate to tRNA(Glu) in a two-step reaction: glutamate is first activated by ATP to form Glu-AMP and then transferred to the acceptor end of tRNA(Glu). The protein is Glutamate--tRNA ligase of Prochlorococcus marinus (strain MIT 9211).